The primary structure comprises 466 residues: Myocardial zonula adherens protein (466 aa).

Polar residues predominate over residues 1-10; it reads MLRSTSTVTL. The N-terminal stretch at 1–20 is a signal peptide; it reads MLRSTSTVTLLSGGAARTPG. The interval 1–23 is disordered; it reads MLRSTSTVTLLSGGAARTPGAPS. Coiled-coil stretches lie at residues 96-142 and 174-418; these read QLKE…SHAQ and LQKT…TQAK. The Required for DYNLL1-binding signature appears at 424–425; the sequence is RE.

Belongs to the MYZAP family. In terms of assembly, interacts with DSP, MPRIP and TJP1/ZO1. Interaction with MPRIP inhibits the activation of transcription factor SRF. Interacts with GRIN1. Interacts with DYNLL1. In terms of tissue distribution, detected in heart, liver, skeletal muscle, placenta, small intestine, lung, prostate and testis. Expressed in arrector pili muscle (at protein level).

The protein resides in the cytoplasm. It is found in the cytoskeleton. The protein localises to the cell membrane. It localises to the myofibril. Its subcellular location is the sarcomere. The protein resides in the i band. It is found in the z line. The protein localises to the cell junction. Functionally, plays a role in cellular signaling via Rho-related GTP-binding proteins and subsequent activation of transcription factor SRF. Targets TJP1 to cell junctions. In cortical neurons, may play a role in glutaminergic signal transduction through interaction with the NMDA receptor subunit GRIN1. This Homo sapiens (Human) protein is Myocardial zonula adherens protein (MYZAP).